The primary structure comprises 356 residues: S-adenosylmethionine:tRNA ribosyltransferase-isomerase (356 aa).

This sequence belongs to the QueA family. As to quaternary structure, monomer.

The protein resides in the cytoplasm. The catalysed reaction is 7-aminomethyl-7-carbaguanosine(34) in tRNA + S-adenosyl-L-methionine = epoxyqueuosine(34) in tRNA + adenine + L-methionine + 2 H(+). The protein operates within tRNA modification; tRNA-queuosine biosynthesis. Transfers and isomerizes the ribose moiety from AdoMet to the 7-aminomethyl group of 7-deazaguanine (preQ1-tRNA) to give epoxyqueuosine (oQ-tRNA). The polypeptide is S-adenosylmethionine:tRNA ribosyltransferase-isomerase (Chromohalobacter salexigens (strain ATCC BAA-138 / DSM 3043 / CIP 106854 / NCIMB 13768 / 1H11)).